Here is a 354-residue protein sequence, read N- to C-terminus: MGYLDLALSYSNQPQTVEAPASGGGLSQNGKFSYGYASSAGKRSSMEDFFETRIDGINGEIVGLFGVFDGHGGARAAEYVKRHLFSNLITHPKFISDTKSAITDAYNHTDSELLKSENSHNRDAGSTASTAILVGDRLVVANVGDSRAVISRGGKAIAVSRDHKPDQSDERERIENAGGFVMWAGTWRVGGVLAVSRAFGDRLLKQYVVADPEIQEEKIDDTLEFLILASDGLWDVFSNEAAVAMVKEVEDPEDSAKKLVGEAIKRGSADNITCVVVRFLEKKSASSSHISSSSSKEAKEMPPLGDLAISSNEAKQVQIGSGNKPENVTNRKPDTASRSTDTLTLERNSVTDKV.

One can recognise a PPM-type phosphatase domain in the interval Ser-33–Phe-279. 4 residues coordinate Mn(2+): Asp-69, Gly-70, Asp-231, and Asp-270. The segment at His-289–Val-354 is disordered. Composition is skewed to polar residues over residues Ile-309–Val-328 and Ala-336–Asn-348.

It belongs to the PP2C family. Mg(2+) is required as a cofactor. The cofactor is Mn(2+).

It carries out the reaction O-phospho-L-seryl-[protein] + H2O = L-seryl-[protein] + phosphate. The catalysed reaction is O-phospho-L-threonyl-[protein] + H2O = L-threonyl-[protein] + phosphate. The chain is Probable protein phosphatase 2C 69 from Arabidopsis thaliana (Mouse-ear cress).